The sequence spans 193 residues: Surfactant protein C (193 aa).

Residues 1-23 (MDMSSKEVLMESPPDYSAGPRSQ) constitute a propeptide that is removed on maturation. S-palmitoyl cysteine attachment occurs at residues cysteine 28 and cysteine 29. A propeptide spanning residues 59–193 (HMSQKHTEMV…LCGELPLYYI (135 aa)) is cleaved from the precursor. In terms of domain architecture, BRICHOS spans 94–193 (FSIGSTGIVV…LCGELPLYYI (100 aa)). Cysteine 121 and cysteine 185 form a disulfide bridge. Residues 147 to 170 (KPSTPTSKLGQEEGHDTGSESDSS) are disordered.

It localises to the secreted. The protein localises to the extracellular space. The protein resides in the surface film. Its function is as follows. Pulmonary surfactant associated proteins promote alveolar stability by lowering the surface tension at the air-liquid interface in the peripheral air spaces. The sequence is that of Surfactant protein C from Mus musculus (Mouse).